Reading from the N-terminus, the 53-residue chain is Sec-independent protein translocase protein TatA (53 aa).

A helical transmembrane segment spans residues 1-21 (MGMSFSHLLIVLLIIFVLFGA).

This sequence belongs to the TatA/E family. As to quaternary structure, the Tat system comprises two distinct complexes: a TatABC complex, containing multiple copies of TatA, TatB and TatC subunits, and a separate TatA complex, containing only TatA subunits. Substrates initially bind to the TatABC complex, which probably triggers association of the separate TatA complex to form the active translocon.

It localises to the cell inner membrane. In terms of biological role, part of the twin-arginine translocation (Tat) system that transports large folded proteins containing a characteristic twin-arginine motif in their signal peptide across membranes. TatA could form the protein-conducting channel of the Tat system. In Rickettsia akari (strain Hartford), this protein is Sec-independent protein translocase protein TatA.